The following is a 1080-amino-acid chain: Carbamoyl phosphate synthase large chain (1080 aa).

The tract at residues 1–403 (MPKRTDLKTI…SLQKALRGLE (403 aa)) is carboxyphosphate synthetic domain. 12 residues coordinate ATP: R129, R169, G175, G176, E208, V210, E215, G241, V242, H243, Q285, and E299. The ATP-grasp 1 domain occupies 133-328 (RVAMGEIGLD…IAKVAAKLAV (196 aa)). Q285, E299, and N301 together coordinate Mg(2+). Q285, E299, and N301 together coordinate Mn(2+). The oligomerization domain stretch occupies residues 404–554 (TGKIGLDPTG…YSTYEDECEA (151 aa)). Residues 555 to 942 (LPSNRDKIMI…AFARAQEAGG (388 aa)) form a carbamoyl phosphate synthetic domain region. The ATP-grasp 2 domain maps to 679–876 (QQLVDKLGLK…LAKIAARCMA (198 aa)). 10 residues coordinate ATP: R715, R754, L756, E761, G787, V788, H789, S790, Q830, and E847. Positions 830, 847, and 849 each coordinate Mg(2+). Mn(2+) is bound by residues Q830, E847, and N849. The 138-residue stretch at 943-1080 (IKAPPLGKAF…LQELHKELEA (138 aa)) folds into the MGS-like domain. An allosteric domain region spans residues 943-1080 (IKAPPLGKAF…LQELHKELEA (138 aa)).

Belongs to the CarB family. Composed of two chains; the small (or glutamine) chain promotes the hydrolysis of glutamine to ammonia, which is used by the large (or ammonia) chain to synthesize carbamoyl phosphate. Tetramer of heterodimers (alpha,beta)4. Requires Mg(2+) as cofactor. It depends on Mn(2+) as a cofactor.

The catalysed reaction is hydrogencarbonate + L-glutamine + 2 ATP + H2O = carbamoyl phosphate + L-glutamate + 2 ADP + phosphate + 2 H(+). It carries out the reaction hydrogencarbonate + NH4(+) + 2 ATP = carbamoyl phosphate + 2 ADP + phosphate + 2 H(+). It functions in the pathway amino-acid biosynthesis; L-arginine biosynthesis; carbamoyl phosphate from bicarbonate: step 1/1. Its pathway is pyrimidine metabolism; UMP biosynthesis via de novo pathway; (S)-dihydroorotate from bicarbonate: step 1/3. Functionally, large subunit of the glutamine-dependent carbamoyl phosphate synthetase (CPSase). CPSase catalyzes the formation of carbamoyl phosphate from the ammonia moiety of glutamine, carbonate, and phosphate donated by ATP, constituting the first step of 2 biosynthetic pathways, one leading to arginine and/or urea and the other to pyrimidine nucleotides. The large subunit (synthetase) binds the substrates ammonia (free or transferred from glutamine from the small subunit), hydrogencarbonate and ATP and carries out an ATP-coupled ligase reaction, activating hydrogencarbonate by forming carboxy phosphate which reacts with ammonia to form carbamoyl phosphate. In Xanthomonas campestris pv. campestris (strain ATCC 33913 / DSM 3586 / NCPPB 528 / LMG 568 / P 25), this protein is Carbamoyl phosphate synthase large chain.